Consider the following 446-residue polypeptide: MNEQKYLSVSALTEYIKVKLENDNHLKRVFLKGEISNFTHHGSGHLYFSLKDEDAAISAMMFKTYASTLSFKPKAGDKVLVEGYISLYKARGTYSISIFSMTLDGIGELFLKYEQNRKMFQELGYFDESLKKPIPKFPKIIAVITSETGAVIQDIKTTISRRYLLAKIELYPILVQGEGSKDDIVKTLARVNRESQADVIILGRGGGSIEDLWSFNEAEVVVAIHQSKIPVITAIGHETDTTLSDYVSDLRAPTPTAAAELATPNMADLIKEIKDKVQLSQYYMNERIKNYTALILNLDERLELASPKSKLELEHKQIDNLTSKLTYFYKSKLTDNLNQVRLLSQRLTSPDEKIERYKERIETLTSRINLLYKKQVDLKTYEYQSSLKQLQGLDPLRIMQRGFSLTTKNQKVITSIEQINTNDELDIQYKDGTAKVKVLSKEGKHI.

This sequence belongs to the XseA family. As to quaternary structure, heterooligomer composed of large and small subunits.

It localises to the cytoplasm. The catalysed reaction is Exonucleolytic cleavage in either 5'- to 3'- or 3'- to 5'-direction to yield nucleoside 5'-phosphates.. Functionally, bidirectionally degrades single-stranded DNA into large acid-insoluble oligonucleotides, which are then degraded further into small acid-soluble oligonucleotides. The sequence is that of Exodeoxyribonuclease 7 large subunit from Acholeplasma laidlawii (strain PG-8A).